A 143-amino-acid polypeptide reads, in one-letter code: Large ribosomal subunit protein uL11 (143 aa).

The protein belongs to the universal ribosomal protein uL11 family. As to quaternary structure, part of the ribosomal stalk of the 50S ribosomal subunit. Interacts with L10 and the large rRNA to form the base of the stalk. L10 forms an elongated spine to which L12 dimers bind in a sequential fashion forming a multimeric L10(L12)X complex. Post-translationally, one or more lysine residues are methylated.

Functionally, forms part of the ribosomal stalk which helps the ribosome interact with GTP-bound translation factors. The protein is Large ribosomal subunit protein uL11 of Pseudomonas paraeruginosa (strain DSM 24068 / PA7) (Pseudomonas aeruginosa (strain PA7)).